We begin with the raw amino-acid sequence, 295 residues long: Nucleotide-binding protein LSEI_0959 (295 aa).

Residue 12–19 participates in ATP binding; sequence GMSGAGKT. Position 62 to 65 (62 to 65) interacts with GTP; sequence DLRS.

It belongs to the RapZ-like family.

Displays ATPase and GTPase activities. The chain is Nucleotide-binding protein LSEI_0959 from Lacticaseibacillus paracasei (strain ATCC 334 / BCRC 17002 / CCUG 31169 / CIP 107868 / KCTC 3260 / NRRL B-441) (Lactobacillus paracasei).